The chain runs to 604 residues: Ectonucleoside triphosphate diphosphohydrolase 7 (604 aa).

At 1-28 the chain is on the cytoplasmic side; it reads MARISFSYLCPASWYFTVPTVSPFLRQR. Residues 29-49 form a helical membrane-spanning segment; that stretch reads VAFLGLFFISCLLLLMLIIDF. Residues 50-546 are Vesicular-facing; that stretch reads RHWSASLPRD…QAHGSWFRLS (497 aa). The active-site Proton acceptor is E217. N-linked (GlcNAc...) asparagine glycosylation occurs at N330. An intrachain disulfide couples C448 to C477. A helical membrane pass occupies residues 547 to 567; the sequence is FVYNHYLFFACILVVLLAIFL. Residues 568–604 lie on the Cytoplasmic side of the membrane; the sequence is YLLRLRRIHHRQTRASAPLDLLWLEEVVPMMGVQVGP.

This sequence belongs to the GDA1/CD39 NTPase family. Ca(2+) serves as cofactor. The cofactor is Mg(2+).

It is found in the cytoplasmic vesicle membrane. The catalysed reaction is a ribonucleoside 5'-triphosphate + H2O = a ribonucleoside 5'-diphosphate + phosphate + H(+). It catalyses the reaction UTP + H2O = UDP + phosphate + H(+). It carries out the reaction GTP + H2O = GDP + phosphate + H(+). The enzyme catalyses CTP + H2O = CDP + phosphate + H(+). Catalyzes the hydrolysis of nucleoside triphosphates and diphosphates in a calcium- or magnesium-dependent manner. Preferentially hydrolyzes nucleoside 5'-triphosphates, with substrate preference for UTP &gt; GTP &gt; CTP. Hydrolyzes ATP and nucleoside diphosphates only to a minor extent. This chain is Ectonucleoside triphosphate diphosphohydrolase 7 (ENTPD7), found in Homo sapiens (Human).